Consider the following 363-residue polypeptide: Fructose-bisphosphate aldolase, muscle type (363 aa).

Residues R56 and K147 each coordinate substrate. K230 serves as the catalytic Schiff-base intermediate with dihydroxyacetone-P.

This sequence belongs to the class I fructose-bisphosphate aldolase family. As to quaternary structure, homotetramer. In terms of tissue distribution, expressed mainly in the skeletal muscle, heart muscle, brain, and some other tissues, but probably not in liver.

The catalysed reaction is beta-D-fructose 1,6-bisphosphate = D-glyceraldehyde 3-phosphate + dihydroxyacetone phosphate. The protein operates within carbohydrate degradation; glycolysis; D-glyceraldehyde 3-phosphate and glycerone phosphate from D-glucose: step 4/4. This chain is Fructose-bisphosphate aldolase, muscle type, found in Lethenteron camtschaticum (Japanese lamprey).